Here is a 344-residue protein sequence, read N- to C-terminus: Centromere protein L (344 aa).

Position 39 is a phosphoserine (serine 39). Position 43 is a phosphothreonine (threonine 43). Serine 53 bears the Phosphoserine mark.

Belongs to the CENP-L/IML3 family. In terms of assembly, component of the CENPA-CAD complex, composed of CENPI, CENPK, CENPL, CENPO, CENPP, CENPQ, CENPR and CENPS. The CENPA-CAD complex interacts with the CENPA-NAC complex, at least composed of CENPA, CENPC, CENPH, CENPM, CENPN, CENPT and CENPU.

The protein resides in the nucleus. It localises to the chromosome. It is found in the centromere. Functionally, component of the CENPA-CAD (nucleosome distal) complex, a complex recruited to centromeres which is involved in assembly of kinetochore proteins, mitotic progression and chromosome segregation. May be involved in incorporation of newly synthesized CENPA into centromeres via its interaction with the CENPA-NAC complex. The protein is Centromere protein L (CENPL) of Homo sapiens (Human).